Consider the following 317-residue polypeptide: MTINDSAISEQGMCEEEQVARIAWFYYHDGLTQSEISDRLGLTRLKVSRLLEKGHQSGIIRVQINSRFEGCLEYETQLRRQFSLQHVRVIPGLADADVGGRLGIGAAHMLMSLLQPQQMLAIGFGEATMNTLQRLSGFISSQQIRLVTLSGGVGSYMTGIGQLNAACSVNIIPAPLRASSADIARTLKNENCVKDVLLAAQAADVAIVGIGAVSQQDDATIIRSGYISQGEQLMIGRKGAVGDILGYFFDAKGDVVTDIKIHNELIGLPLSSLKTIPVRVGVAGGENKAEAIAAAMKGGYINALVTDQDTAAAILRS.

Residues 33 to 56 constitute a DNA-binding region (H-T-H motif); that stretch reads QSEISDRLGLTRLKVSRLLEKGHQ.

The protein belongs to the SorC transcriptional regulatory family.

The protein localises to the cytoplasm. With respect to regulation, inactivated by phosphorylated autoinducer-2 (phospho-AI-2). Phospho-AI-2 acts by binding to LsrR, which is then unable to bind to the promoter regions, allowing the transcription of the target genes. Transcriptional regulator that represses the expression of the lsr operon in the absence of the quorum-sensing signaling molecule autoinducer 2 (AI-2). It also represses the expression of the lsrRK operon. Acts by binding directly to the lsrA and lsrR promoter regions. In the presence of phosphorylated autoinducer-2 (phospho-AI-2), LsrR is inactivated, leading to the transcription of the genes. The polypeptide is Transcriptional regulator LsrR (lsrR) (Escherichia coli O139:H28 (strain E24377A / ETEC)).